Consider the following 414-residue polypeptide: Gamma-glutamyl phosphate reductase (414 aa).

It belongs to the gamma-glutamyl phosphate reductase family.

Its subcellular location is the cytoplasm. The enzyme catalyses L-glutamate 5-semialdehyde + phosphate + NADP(+) = L-glutamyl 5-phosphate + NADPH + H(+). It participates in amino-acid biosynthesis; L-proline biosynthesis; L-glutamate 5-semialdehyde from L-glutamate: step 2/2. Functionally, catalyzes the NADPH-dependent reduction of L-glutamate 5-phosphate into L-glutamate 5-semialdehyde and phosphate. The product spontaneously undergoes cyclization to form 1-pyrroline-5-carboxylate. The protein is Gamma-glutamyl phosphate reductase of Xanthomonas campestris pv. campestris (strain ATCC 33913 / DSM 3586 / NCPPB 528 / LMG 568 / P 25).